Here is a 172-residue protein sequence, read N- to C-terminus: NADH-ubiquinone oxidoreductase chain 6 (172 aa).

5 helical membrane passes run 1-21 (MTYF…AVAS), 25-45 (PYFA…VLVG), 53-73 (LVLF…AALA), 86-106 (VLGY…IFWG), and 140-160 (GGML…VLEL).

Belongs to the complex I subunit 6 family.

It localises to the mitochondrion membrane. The catalysed reaction is a ubiquinone + NADH + 5 H(+)(in) = a ubiquinol + NAD(+) + 4 H(+)(out). Functionally, core subunit of the mitochondrial membrane respiratory chain NADH dehydrogenase (Complex I) that is believed to belong to the minimal assembly required for catalysis. Complex I functions in the transfer of electrons from NADH to the respiratory chain. The immediate electron acceptor for the enzyme is believed to be ubiquinone. The sequence is that of NADH-ubiquinone oxidoreductase chain 6 (MT-ND6) from Cyprinus carpio (Common carp).